The chain runs to 501 residues: Geissoschizine oxidase (501 aa).

Residues 1-21 form a helical membrane-spanning segment; that stretch reads MEFSFSSPALYIVYFLLFFVV. N60 carries an N-linked (GlcNAc...) asparagine glycan. C442 is a binding site for heme.

The protein belongs to the cytochrome P450 family. Heme is required as a cofactor. Expressed in leaf epidermis. Also present in the leaf internal phloem-associated parenchyma (IPAP) inside the mesophyll.

The protein localises to the membrane. The enzyme catalyses (19E)-geissoschizine + reduced [NADPH--hemoprotein reductase] + O2 = akuammicine + formate + oxidized [NADPH--hemoprotein reductase] + H2O + H(+). The catalysed reaction is (19E)-geissoschizine + reduced [NADPH--hemoprotein reductase] + O2 = 3,17-didehydrostemmadenine + oxidized [NADPH--hemoprotein reductase] + 2 H2O. It functions in the pathway alkaloid biosynthesis. In terms of biological role, component of the seco-iridoid and derivatives monoterpenoid indole alkaloids (MIAs, e.g. vincristine, quinine, and strychnine) biosynthesis pathway. Catalyzes the oxidation of 19E-geissoschizine to produce a short-lived MIA unstable intermediate which can be spontaneously converted into akuammicine or oxidized by Redox1 and Redox2 to produce stemmadenine and 16S/R-deshydroxymethylstemmadenine (16S/R-DHS). The sequence is that of Geissoschizine oxidase from Catharanthus roseus (Madagascar periwinkle).